Reading from the N-terminus, the 607-residue chain is Developmental gene 1062 protein (607 aa).

Disordered regions lie at residues 62 to 84, 334 to 451, and 568 to 602; these read LQGQ…HNNQ, ICDD…SNFQ, and DNNT…NDLL. The segment covering 334–363 has biased composition (low complexity); that stretch reads ICDDSSNSSTPSLSSYSNGNNKYNNNNNDS. Residues 364 to 382 show a composition bias toward acidic residues; it reads SESDESDDDDNNDDDDNDS. Low complexity-rich tracts occupy residues 383 to 451 and 568 to 582; these read IDFN…SNFQ and DNNT…ISVN.

The protein is Developmental gene 1062 protein (DG1062) of Dictyostelium discoideum (Social amoeba).